The sequence spans 104 residues: Proteasome subunit beta type-8 (104 aa).

It belongs to the peptidase T1B family. In terms of assembly, the 26S proteasome consists of a 20S proteasome core and two 19S regulatory subunits. The 20S proteasome core is composed of 28 subunits that are arranged in four stacked rings, resulting in a barrel-shaped structure. The two end rings are each formed by seven alpha subunits, and the two central rings are each formed by seven beta subunits. The catalytic chamber with the active sites is on the inside of the barrel. Component of the immunoproteasome, where it displaces the equivalent housekeeping subunit PSMB5. Component of the spermatoproteasome, a form of the proteasome specifically found in testis. Directly interacts with POMP.

The protein localises to the cytoplasm. The protein resides in the nucleus. The enzyme catalyses Cleavage of peptide bonds with very broad specificity.. Its function is as follows. The proteasome is a multicatalytic proteinase complex which is characterized by its ability to cleave peptides with Arg, Phe, Tyr, Leu, and Glu adjacent to the leaving group at neutral or slightly basic pH. The proteasome has an ATP-dependent proteolytic activity. This subunit is involved in antigen processing to generate class I binding peptides. May participate in the generation of spliced peptides resulting from the ligation of two separate proteasomal cleavage products that are not contiguous in the parental protein. Required for adipocyte differentiation. This is Proteasome subunit beta type-8 (PSMB8) from Sus scrofa (Pig).